The sequence spans 103 residues: Small ribosomal subunit protein uS10 (103 aa).

Positions 35-59 (LSGPVPLPTKTLEVPSRKSPDGEGT) are disordered.

The protein belongs to the universal ribosomal protein uS10 family. In terms of assembly, part of the 30S ribosomal subunit.

Its function is as follows. Involved in the binding of tRNA to the ribosomes. The polypeptide is Small ribosomal subunit protein uS10 (rps10) (Haloarcula marismortui (strain ATCC 43049 / DSM 3752 / JCM 8966 / VKM B-1809) (Halobacterium marismortui)).